Consider the following 726-residue polypeptide: Dipeptidyl-peptidase 5 (726 aa).

A signal peptide spans 1 to 19 (MAPAKWLIASLAFASTGLA). Asparagine 96 and asparagine 252 each carry an N-linked (GlcNAc...) asparagine glycan. The segment at 268 to 292 (VAEPINKRNGPRTPHGIEGASSSPV) is disordered. Asparagine 485 is a glycosylation site (N-linked (GlcNAc...) asparagine). Serine 558 functions as the Charge relay system in the catalytic mechanism. Residue asparagine 605 is glycosylated (N-linked (GlcNAc...) asparagine). Active-site charge relay system residues include aspartate 641 and histidine 673. The N-linked (GlcNAc...) asparagine glycan is linked to asparagine 699.

It belongs to the peptidase S9C family.

It localises to the secreted. Its function is as follows. Extracellular dipeptidyl-peptidase which removes N-terminal dipeptides sequentially from polypeptides having unsubstituted N-termini. Contributes to pathogenicity. The sequence is that of Dipeptidyl-peptidase 5 (DPP5) from Arthroderma otae (strain ATCC MYA-4605 / CBS 113480) (Microsporum canis).